A 1367-amino-acid chain; its full sequence is Histone acetyltransferase HAC2 (1367 aa).

The disordered stretch occupies residues 110–151; sequence TSSIPGSSGSASETNSGSDITKQDFKNDSPSDSKKVQGSSTS. Low complexity predominate over residues 111 to 127; sequence SSIPGSSGSASETNSGS. Basic and acidic residues predominate over residues 130-144; it reads TKQDFKNDSPSDSKK. A run of 12 repeats spans residues 188–200, 223–235, 251–263, 286–298, 314–326, 349–361, 377–389, 418–430, 432–444, 459–471, 473–485, and 500–512. Residues 188–512 form a 12 X 13 AA approximate repeats region; that stretch reads KLGTVVDIVE…IGVDIVEPMK (325 aa). A PHD-type zinc finger spans residues 688–765; sequence HQICSPCHSR…EYICPTCLLE (78 aa). The CBP/p300-type HAT domain occupies 780–1213; it reads DSGAKDLPET…ILHHLHTSNK (434 aa). Acetyl-CoA contacts are provided by residues 903–905, 922–923, and tryptophan 978; these read LDS and RT. The ZZ-type 1; degenerate zinc-finger motif lies at 1094 to 1157; it reads ELNYSCTRCS…QLSKVQVNGV (64 aa). Cysteine 1099, cysteine 1102, cysteine 1123, cysteine 1126, cysteine 1225, cysteine 1228, cysteine 1240, cysteine 1243, cysteine 1249, cysteine 1252, histidine 1261, and histidine 1263 together coordinate Zn(2+). Residues 1220-1273 form a ZZ-type 2 zinc finger; sequence SSSLTCTACKKDVSTTIYFPCLLCPDYRACTGCYTKNRTLRHLHIFPTLPSANR. The TAZ-type zinc finger occupies 1274–1359; that stretch reads APSRTVMVLE…NCPVPQCRDR (86 aa).

As to expression, rosette leaves, stems and flowers.

The protein resides in the nucleus. The catalysed reaction is L-lysyl-[protein] + acetyl-CoA = N(6)-acetyl-L-lysyl-[protein] + CoA + H(+). Functionally, acetyltransferase enzyme. Acetylates histones, giving a specific tag for transcriptional activation. No acetyltransferase activity found in vitro. The sequence is that of Histone acetyltransferase HAC2 (HAC2) from Arabidopsis thaliana (Mouse-ear cress).